The following is an 805-amino-acid chain: Phenylalanine--tRNA ligase beta subunit (805 aa).

A tRNA-binding domain is found at 39–148; it reads APPFTGVVVT…AALRPGTDIR (110 aa). The B5 domain maps to 399–474; that stretch reads PVREPVRMRL…RVYGFERIPD (76 aa). Mg(2+) contacts are provided by D452, D458, E461, and E462. Positions 703-804 constitute an FDX-ACB domain; the sequence is SRQPVVVRDL…LVAAHNARQR (102 aa).

Belongs to the phenylalanyl-tRNA synthetase beta subunit family. Type 1 subfamily. Tetramer of two alpha and two beta subunits. Mg(2+) serves as cofactor.

The protein localises to the cytoplasm. The catalysed reaction is tRNA(Phe) + L-phenylalanine + ATP = L-phenylalanyl-tRNA(Phe) + AMP + diphosphate + H(+). This Bordetella pertussis (strain Tohama I / ATCC BAA-589 / NCTC 13251) protein is Phenylalanine--tRNA ligase beta subunit.